Here is a 971-residue protein sequence, read N- to C-terminus: Unconventional myosin-XIX (971 aa).

Residues 1-25 (MSRPLSKNTEREPKQINGHQNNLSN) form a disordered region. In terms of domain architecture, Myosin motor spans 48-755 (HLYDDLTKVN…MVELLEERRL (708 aa)). 145–152 (GESGAGKT) provides a ligand contact to ATP. Positions 611-633 (LESLMQILHSTTPHYIRCIKPNV) are actin-binding. 2 consecutive IQ domains span residues 758–787 (ISSK…ATTI) and 780–809 (QSKA…AATV). The myMOMA region stretch occupies residues 826-971 (AAELDDSTED…FNEILLEKTV (146 aa)).

The protein belongs to the TRAFAC class myosin-kinesin ATPase superfamily. Myosin family. In terms of assembly, myosin is a hexamer of 2 heavy chains and 4 light chains.

It localises to the mitochondrion outer membrane. The protein localises to the cytoplasm. The protein resides in the cytoskeleton. Its function is as follows. Actin-based motor molecule with ATPase activity that localizes to the mitochondrion outer membrane. Motor protein that moves towards the plus-end of actin filaments. Required for mitochondrial inheritance during mitosis. May be involved in mitochondrial transport or positioning. This chain is Unconventional myosin-XIX, found in Xenopus laevis (African clawed frog).